Reading from the N-terminus, the 638-residue chain is CTTNBP2 N-terminal-like protein (638 aa).

The stretch at 87–284 (MKQCKNMQER…KDLEAAQQHR (198 aa)) forms a coiled coil. Disordered stretches follow at residues 280–303 (AQQH…TATE), 360–430 (RELT…PCSS), 463–490 (RHKF…LSPT), and 514–621 (NQGP…CSPS). S285 carries the post-translational modification Phosphoserine. The segment covering 360-371 (RELTSDSSTENQ) has biased composition (polar residues). Composition is skewed to low complexity over residues 401 to 430 (TMPS…PCSS) and 467 to 477 (QSQADQDQQAS). Residues S481, S488, S522, S526, S559, S562, and S567 each carry the phosphoserine modification. A compositionally biased stretch (polar residues) spans 514–528 (NQGPIKPVSPNSSPF). A phosphothreonine mark is found at T569 and T589. Polar residues predominate over residues 589–620 (TPSQSATTPVTKTHSQASSLAATEDLASSCSP). Position 591 is a phosphoserine (S591).

In terms of assembly, interacts with CTTN/cortactin; this interaction may redistribute CTTN to stress fibers. May form homomers. Associates with the core of STRIPAK complexes composed of PP2A catalytic and scaffolding subunits, the striatins (PP2A regulatory subunits), the striatin-associated proteins MOB4, STRIP1 and STRIP2, PDCD10 and members of the STE20 kinases, such as STK24 and STK26. Predominantly expressed in skin, also detectable in spleen and lung (at protein level). Very low levels, if any, in brain (at protein level).

The protein localises to the cell projection. It is found in the lamellipodium. It localises to the cytoplasm. The protein resides in the cytoskeleton. Its subcellular location is the stress fiber. Its function is as follows. Regulates lamellipodial actin dynamics in a CTTN-dependent manner. Associates with core striatin-interacting phosphatase and kinase (STRIPAK) complex to form CTTNBP2NL-STRIPAK complexes. STRIPAK complexes have critical roles in protein (de)phosphorylation and are regulators of multiple signaling pathways including Hippo, MAPK, nuclear receptor and cytoskeleton remodeling. Different types of STRIPAK complexes are involved in a variety of biological processes such as cell growth, differentiation, apoptosis, metabolism and immune regulation. The protein is CTTNBP2 N-terminal-like protein (Cttnbp2nl) of Mus musculus (Mouse).